Consider the following 162-residue polypeptide: NADH-quinone oxidoreductase subunit I (162 aa).

4Fe-4S ferredoxin-type domains are found at residues 53 to 83 (LRRYANGEERCIACKLCEAVCPALAITIEAE) and 93 to 122 (TRYDIDMTKCIYCGLCEEACPVDAIVEGPN). Residues C63, C66, C69, C73, C102, C105, C108, and C112 each coordinate [4Fe-4S] cluster.

The protein belongs to the complex I 23 kDa subunit family. In terms of assembly, NDH-1 is composed of 14 different subunits. Subunits NuoA, H, J, K, L, M, N constitute the membrane sector of the complex. The cofactor is [4Fe-4S] cluster.

It localises to the cell inner membrane. The enzyme catalyses a quinone + NADH + 5 H(+)(in) = a quinol + NAD(+) + 4 H(+)(out). In terms of biological role, NDH-1 shuttles electrons from NADH, via FMN and iron-sulfur (Fe-S) centers, to quinones in the respiratory chain. The immediate electron acceptor for the enzyme in this species is believed to be ubiquinone. Couples the redox reaction to proton translocation (for every two electrons transferred, four hydrogen ions are translocated across the cytoplasmic membrane), and thus conserves the redox energy in a proton gradient. This is NADH-quinone oxidoreductase subunit I from Granulibacter bethesdensis (strain ATCC BAA-1260 / CGDNIH1).